A 209-amino-acid chain; its full sequence is Uracil phosphoribosyltransferase (209 aa).

Residues arginine 79, arginine 104, and 131-139 contribute to the 5-phospho-alpha-D-ribose 1-diphosphate site; that span reads DPMLATGGS. Uracil is bound by residues isoleucine 194 and 199–201; that span reads GDA. Aspartate 200 is a 5-phospho-alpha-D-ribose 1-diphosphate binding site.

It belongs to the UPRTase family. Mg(2+) serves as cofactor.

The catalysed reaction is UMP + diphosphate = 5-phospho-alpha-D-ribose 1-diphosphate + uracil. It participates in pyrimidine metabolism; UMP biosynthesis via salvage pathway; UMP from uracil: step 1/1. With respect to regulation, allosterically activated by GTP. In terms of biological role, catalyzes the conversion of uracil and 5-phospho-alpha-D-ribose 1-diphosphate (PRPP) to UMP and diphosphate. The polypeptide is Uracil phosphoribosyltransferase (Citrifermentans bemidjiense (strain ATCC BAA-1014 / DSM 16622 / JCM 12645 / Bem) (Geobacter bemidjiensis)).